A 439-amino-acid chain; its full sequence is Xylose isomerase (439 aa).

Active-site residues include H101 and D104. 7 residues coordinate Mg(2+): E232, E268, H271, D296, D307, D309, and D339.

The protein belongs to the xylose isomerase family. In terms of assembly, homotetramer. Mg(2+) serves as cofactor.

It localises to the cytoplasm. The catalysed reaction is alpha-D-xylose = alpha-D-xylulofuranose. The sequence is that of Xylose isomerase from Photorhabdus laumondii subsp. laumondii (strain DSM 15139 / CIP 105565 / TT01) (Photorhabdus luminescens subsp. laumondii).